Consider the following 202-residue polypeptide: Precorrin-2 dehydrogenase (202 aa).

Residues 20 to 21 and 41 to 42 each bind NAD(+); these read TI and PT.

It belongs to the precorrin-2 dehydrogenase / sirohydrochlorin ferrochelatase family. As to quaternary structure, homodimer.

It carries out the reaction precorrin-2 + NAD(+) = sirohydrochlorin + NADH + 2 H(+). It functions in the pathway cofactor biosynthesis; adenosylcobalamin biosynthesis; sirohydrochlorin from precorrin-2: step 1/1. It participates in porphyrin-containing compound metabolism; siroheme biosynthesis; sirohydrochlorin from precorrin-2: step 1/1. Catalyzes the dehydrogenation of precorrin-2 to form sirohydrochlorin which is used as a precursor in both siroheme biosynthesis and in the anaerobic branch of adenosylcobalamin biosynthesis. It is unable to oxidize precorrin-3. This chain is Precorrin-2 dehydrogenase (sirC), found in Priestia megaterium (Bacillus megaterium).